Reading from the N-terminus, the 475-residue chain is UDP-glycosyltransferase 1 (475 aa).

Residue His15 is the Proton acceptor of the active site. An an anthocyanidin-binding site is contributed by His15. Asp117 serves as the catalytic Charge relay. Ala345, Gln347, His362, Trp365, Asn366, Ser367, and Glu370 together coordinate UDP-alpha-D-glucose. Residue Gly385 coordinates an anthocyanidin. Glu386 and Gln387 together coordinate UDP-alpha-D-glucose.

It belongs to the UDP-glycosyltransferase family. In terms of tissue distribution, mostly expressed in leaves and flowers, and, to a lower extent, in roots and stems.

The enzyme catalyses (20S)-protopanaxadiol + UDP-alpha-D-glucose = (20S)-ginsenoside C-K + UDP + H(+). The catalysed reaction is (20S)-ginsenoside Rg3 + UDP-alpha-D-glucose = (20S)-ginsenoside Rd + UDP + H(+). It catalyses the reaction (20S)-ginsenoside Rh2 + UDP-alpha-D-glucose = (20S)-ginsenoside F2 + UDP + H(+). It carries out the reaction (20S)-protopanaxatriol + UDP-alpha-D-glucose = (20S)-ginsenoside F1 + UDP + H(+). The enzyme catalyses dammarenediol-II + UDP-alpha-D-glucose = (20S)-20-O-(beta-D-glucosyl)-3-hydroxydammarene + UDP + H(+). It functions in the pathway secondary metabolite biosynthesis; terpenoid biosynthesis. Functionally, component of the dammarane-type triterpene saponins (e.g. ginsenosides or panaxosides) biosynthetic pathway. Glycosyltransferase that catalyzes the biosynthesis of ginsenoside F1 from protopanaxatriol (PPT). Triggers C20-OH glycosylation of ginsenoside Rg3 to produce ginsenoside Rd. Mediates the conversion of protopanaxadiol (PPD) to the ginsenoside compound K. catalyzes the production of 20S-O-beta-(D-glucosyl)-dammarenediol II form dammarenediol II (DM). This Panax ginseng (Korean ginseng) protein is UDP-glycosyltransferase 1.